A 145-amino-acid chain; its full sequence is Large ribosomal subunit protein uL16 (145 aa).

Belongs to the universal ribosomal protein uL16 family. Part of the 50S ribosomal subunit.

Its function is as follows. Binds 23S rRNA and is also seen to make contacts with the A and possibly P site tRNAs. The protein is Large ribosomal subunit protein uL16 of Desulfitobacterium hafniense (strain DSM 10664 / DCB-2).